We begin with the raw amino-acid sequence, 169 residues long: Macro domain-containing protein SCO6450 (169 aa).

One can recognise a Macro domain in the interval 1 to 169 (MTGITLVQGD…AYEAFAARLG (169 aa)).

The protein belongs to the MacroD-type family.

In Streptomyces coelicolor (strain ATCC BAA-471 / A3(2) / M145), this protein is Macro domain-containing protein SCO6450.